Here is a 576-residue protein sequence, read N- to C-terminus: Urease subunit alpha (576 aa).

In terms of domain architecture, Urease spans 132-576; sequence GGIDTHIHFI…LPMAQRYFLF (445 aa). H137, H139, and K220 together coordinate Ni(2+). K220 carries the post-translational modification N6-carboxylysine. A substrate-binding site is contributed by H222. Ni(2+) is bound by residues H249 and H275. The active-site Proton donor is H323. D363 serves as a coordination point for Ni(2+).

It belongs to the metallo-dependent hydrolases superfamily. Urease alpha subunit family. In terms of assembly, heterotrimer of UreA (gamma), UreB (beta) and UreC (alpha) subunits. Three heterotrimers associate to form the active enzyme. The cofactor is Ni cation. Carboxylation allows a single lysine to coordinate two nickel ions.

The protein resides in the cytoplasm. The enzyme catalyses urea + 2 H2O + H(+) = hydrogencarbonate + 2 NH4(+). Its pathway is nitrogen metabolism; urea degradation; CO(2) and NH(3) from urea (urease route): step 1/1. The protein is Urease subunit alpha of Paenarthrobacter aurescens (strain TC1).